The sequence spans 509 residues: Glycogen synthase 2 (509 aa).

K15 lines the ADP-alpha-D-glucose pocket.

It belongs to the glycosyltransferase 1 family. Bacterial/plant glycogen synthase subfamily.

The catalysed reaction is [(1-&gt;4)-alpha-D-glucosyl](n) + ADP-alpha-D-glucose = [(1-&gt;4)-alpha-D-glucosyl](n+1) + ADP + H(+). Its pathway is glycan biosynthesis; glycogen biosynthesis. Its function is as follows. Synthesizes alpha-1,4-glucan chains using ADP-glucose. The chain is Glycogen synthase 2 (glgA2) from Agrobacterium fabrum (strain C58 / ATCC 33970) (Agrobacterium tumefaciens (strain C58)).